The primary structure comprises 591 residues: uncharacterized protein (591 aa).

Positions 1 to 30 (MGKLLFGKLVFKKSLFLLSGMSSLAVFLTA) are cleaved as a signal peptide. The N-palmitoyl cysteine moiety is linked to residue cysteine 31. The S-diacylglycerol cysteine moiety is linked to residue cysteine 31. Over residues 476–488 (KKKLSEVATKKNE) the composition is skewed to basic and acidic residues. Disordered regions lie at residues 476–497 (KKKLSEVATKKNENGSTKNGSN) and 510–535 (SSSSTSMRNGSSDSNQQNFKTTDNDG). The span at 510 to 523 (SSSSTSMRNGSSDS) shows a compositional bias: low complexity.

The protein to T.pallidum TmpC.

It is found in the cell membrane. This is an uncharacterized protein from Mycoplasma genitalium (strain ATCC 33530 / DSM 19775 / NCTC 10195 / G37) (Mycoplasmoides genitalium).